The following is a 266-amino-acid chain: Ras-like protein family member 12 (266 aa).

GTP is bound by residues 27 to 34, 74 to 78, and 134 to 137; these read GRRGAGKS, DTADL, and NKLD.

This sequence belongs to the small GTPase superfamily. Ras family.

The enzyme catalyses GTP + H2O = GDP + phosphate + H(+). The chain is Ras-like protein family member 12 (RASL12) from Homo sapiens (Human).